The following is a 201-amino-acid chain: Recombination protein RecR (201 aa).

The C4-type zinc finger occupies 60–75 (CTSCGNVDTSDPCTIC). A Toprim domain is found at 83–178 (TTLVVVEDVS…KVTRLAHGVP (96 aa)).

The protein belongs to the RecR family.

May play a role in DNA repair. It seems to be involved in an RecBC-independent recombinational process of DNA repair. It may act with RecF and RecO. This is Recombination protein RecR from Methylobacterium radiotolerans (strain ATCC 27329 / DSM 1819 / JCM 2831 / NBRC 15690 / NCIMB 10815 / 0-1).